We begin with the raw amino-acid sequence, 344 residues long: Phenylalanine--tRNA ligase alpha subunit (344 aa).

Glutamate 259 provides a ligand contact to Mg(2+).

It belongs to the class-II aminoacyl-tRNA synthetase family. Phe-tRNA synthetase alpha subunit type 1 subfamily. Tetramer of two alpha and two beta subunits. Mg(2+) is required as a cofactor.

It is found in the cytoplasm. It catalyses the reaction tRNA(Phe) + L-phenylalanine + ATP = L-phenylalanyl-tRNA(Phe) + AMP + diphosphate + H(+). In Nitrosospira multiformis (strain ATCC 25196 / NCIMB 11849 / C 71), this protein is Phenylalanine--tRNA ligase alpha subunit.